We begin with the raw amino-acid sequence, 629 residues long: Kelch-like protein 8 (629 aa).

A compositionally biased stretch (polar residues) spans 1–10; it reads MASESTNGKQ. The interval 1 to 40 is disordered; the sequence is MASESTNGKQARSHVTKGRRQYQHQHQQQQQQQQQVRSRS. The residue at position 2 (Ala-2) is an N-acetylalanine. Residues 11-23 show a composition bias toward basic residues; the sequence is ARSHVTKGRRQYQ. Residues 24–35 are compositionally biased toward low complexity; sequence HQHQQQQQQQQQ. The region spanning 76–143 is the BTB domain; it reads CDVTLKVGSK…VYSSRLTLTV (68 aa). A BACK domain is found at 178-279; sequence CLAVRAFAES…LPVDFLMGVV (102 aa). 6 Kelch repeats span residues 328 to 375, 376 to 422, 424 to 469, 471 to 516, 517 to 563, and 565 to 610; these read VLFC…SVEG, KVYA…SLGG, IYAI…ALIN, VYAV…ELHG, CLYV…TVMG, and IFAV…VCDC.

Component of the BCR(KLHL8) E3 ubiquitin ligase complex, at least composed of CUL3, KLHL8 and RBX1. Interacts with RAPSN.

The protein operates within protein modification; protein ubiquitination. Substrate-specific adapter of a BCR (BTB-CUL3-RBX1) E3 ubiquitin ligase complex required for The BCR(KLHL8) ubiquitin ligase complex mediates ubiquitination and degradation of RAPSN. This chain is Kelch-like protein 8 (Klhl8), found in Mus musculus (Mouse).